Reading from the N-terminus, the 574-residue chain is Sulfate adenylyltransferase (574 aa).

The N-terminal stretch occupies residues 1 to 169 (MSNPPHGGVL…VEAINKLNHY (169 aa)). Residues 170–394 (DYVALRYTPA…LRESSRPRST (225 aa)) form a catalytic region. Glutamine 197 serves as a coordination point for sulfate. ATP is bound by residues 197–200 (QTRN) and 291–294 (GRDH). Catalysis depends on residues threonine 198, arginine 199, and asparagine 200. Arginine 199 lines the sulfate pocket. A sulfate-binding site is contributed by alanine 295. Residue valine 333 coordinates ATP. Positions 395-574 (QGFTIFLTGY…LETEGFFDRA (180 aa)) are allosteric regulation domain; adenylyl-sulfate kinase-like. 3'-phosphoadenylyl sulfate contacts are provided by residues 434–437 (DTVR), arginine 451, 477–478 (IA), and arginine 516.

The protein in the N-terminal section; belongs to the sulfate adenylyltransferase family. This sequence in the C-terminal section; belongs to the APS kinase family. In terms of assembly, homohexamer. Dimer of trimers.

The protein localises to the cytoplasm. It catalyses the reaction sulfate + ATP + H(+) = adenosine 5'-phosphosulfate + diphosphate. It participates in sulfur metabolism; hydrogen sulfide biosynthesis; sulfite from sulfate: step 1/3. Its activity is regulated as follows. Allosterically inhibited by 3'-phosphoadenosine 5'-phosphosulfate (PAPS). Its function is as follows. Catalyzes the first intracellular reaction of sulfate assimilation, forming adenosine-5'-phosphosulfate (APS) from inorganic sulfate and ATP. Plays an important role in sulfate activation as a component of the biosynthesis pathway of sulfur-containing amino acids. This Aspergillus clavatus (strain ATCC 1007 / CBS 513.65 / DSM 816 / NCTC 3887 / NRRL 1 / QM 1276 / 107) protein is Sulfate adenylyltransferase.